A 185-amino-acid chain; its full sequence is UPF0397 protein lhv_0999 (185 aa).

Helical transmembrane passes span 11-31 (VVAM…TSIP), 45-65 (FLAL…GFIG), 72-92 (IMYG…GLII), 111-131 (ILLF…VVAP), and 145-165 (VFVQ…VVGT).

The protein belongs to the UPF0397 family.

It localises to the cell membrane. The polypeptide is UPF0397 protein lhv_0999 (Lactobacillus helveticus (strain DPC 4571)).